Reading from the N-terminus, the 958-residue chain is Glycine dehydrogenase (decarboxylating) (958 aa).

Lysine 708 carries the post-translational modification N6-(pyridoxal phosphate)lysine.

It belongs to the GcvP family. In terms of assembly, the glycine cleavage system is composed of four proteins: P, T, L and H. Pyridoxal 5'-phosphate serves as cofactor.

It carries out the reaction N(6)-[(R)-lipoyl]-L-lysyl-[glycine-cleavage complex H protein] + glycine + H(+) = N(6)-[(R)-S(8)-aminomethyldihydrolipoyl]-L-lysyl-[glycine-cleavage complex H protein] + CO2. In terms of biological role, the glycine cleavage system catalyzes the degradation of glycine. The P protein binds the alpha-amino group of glycine through its pyridoxal phosphate cofactor; CO(2) is released and the remaining methylamine moiety is then transferred to the lipoamide cofactor of the H protein. The protein is Glycine dehydrogenase (decarboxylating) of Photorhabdus laumondii subsp. laumondii (strain DSM 15139 / CIP 105565 / TT01) (Photorhabdus luminescens subsp. laumondii).